We begin with the raw amino-acid sequence, 184 residues long: UPF0397 protein SAR2767 (184 aa).

5 helical membrane-spanning segments follow: residues 11 to 31, 44 to 64, 77 to 97, 117 to 137, and 148 to 168; these read VVAI…VVIP, AFLA…TGLI, AWWS…WIGL, GQII…DILI, and QGVI…TILL.

It belongs to the UPF0397 family.

The protein resides in the cell membrane. This chain is UPF0397 protein SAR2767, found in Staphylococcus aureus (strain MRSA252).